A 445-amino-acid chain; its full sequence is Phosphoglucosamine mutase (445 aa).

Residue S102 is the Phosphoserine intermediate of the active site. Mg(2+) is bound by residues S102, D241, D243, and D245. S102 carries the phosphoserine modification.

This sequence belongs to the phosphohexose mutase family. It depends on Mg(2+) as a cofactor. Activated by phosphorylation.

It catalyses the reaction alpha-D-glucosamine 1-phosphate = D-glucosamine 6-phosphate. Functionally, catalyzes the conversion of glucosamine-6-phosphate to glucosamine-1-phosphate. This chain is Phosphoglucosamine mutase, found in Acinetobacter baumannii (strain ACICU).